Here is a 243-residue protein sequence, read N- to C-terminus: Transcription factor TFIIS homolog (243 aa).

Positions 77–201 constitute a TFIIS central domain; sequence MRDIIQMMFF…SQQKVAEKTS (125 aa). The TFIIS-type zinc finger occupies 202 to 242; that stretch reads QLYKCPNCKQRMCTYREVQTRALDEPSTIFCTCKKCGHEFI. Cys-206, Cys-209, Cys-234, and Cys-237 together coordinate Zn(2+).

This sequence belongs to the TFS-II family.

In terms of biological role, putative initiation factor. Necessary for efficient transcription elongation past template-encoded arresting sites. This Ornithodoros (relapsing fever ticks) protein is Transcription factor TFIIS homolog.